A 460-amino-acid polypeptide reads, in one-letter code: Methylenetetrahydrofolate--tRNA-(uracil-5-)-methyltransferase TrmFO (460 aa).

12 to 17 (GGGLAG) is a binding site for FAD.

The protein belongs to the MnmG family. TrmFO subfamily. It depends on FAD as a cofactor.

The protein localises to the cytoplasm. The catalysed reaction is uridine(54) in tRNA + (6R)-5,10-methylene-5,6,7,8-tetrahydrofolate + NADH + H(+) = 5-methyluridine(54) in tRNA + (6S)-5,6,7,8-tetrahydrofolate + NAD(+). The enzyme catalyses uridine(54) in tRNA + (6R)-5,10-methylene-5,6,7,8-tetrahydrofolate + NADPH + H(+) = 5-methyluridine(54) in tRNA + (6S)-5,6,7,8-tetrahydrofolate + NADP(+). In terms of biological role, catalyzes the folate-dependent formation of 5-methyl-uridine at position 54 (M-5-U54) in all tRNAs. In Crocosphaera subtropica (strain ATCC 51142 / BH68) (Cyanothece sp. (strain ATCC 51142)), this protein is Methylenetetrahydrofolate--tRNA-(uracil-5-)-methyltransferase TrmFO.